We begin with the raw amino-acid sequence, 184 residues long: Ribosome-recycling factor (184 aa).

This sequence belongs to the RRF family.

Its subcellular location is the cytoplasm. In terms of biological role, responsible for the release of ribosomes from messenger RNA at the termination of protein biosynthesis. May increase the efficiency of translation by recycling ribosomes from one round of translation to another. The polypeptide is Ribosome-recycling factor (Acinetobacter baumannii (strain AB307-0294)).